A 369-amino-acid polypeptide reads, in one-letter code: Anhydro-N-acetylmuramic acid kinase (369 aa).

12-19 (GTSMDGVD) contacts ATP.

The protein belongs to the anhydro-N-acetylmuramic acid kinase family.

The enzyme catalyses 1,6-anhydro-N-acetyl-beta-muramate + ATP + H2O = N-acetyl-D-muramate 6-phosphate + ADP + H(+). The protein operates within amino-sugar metabolism; 1,6-anhydro-N-acetylmuramate degradation. Its pathway is cell wall biogenesis; peptidoglycan recycling. Its function is as follows. Catalyzes the specific phosphorylation of 1,6-anhydro-N-acetylmuramic acid (anhMurNAc) with the simultaneous cleavage of the 1,6-anhydro ring, generating MurNAc-6-P. Is required for the utilization of anhMurNAc either imported from the medium or derived from its own cell wall murein, and thus plays a role in cell wall recycling. This is Anhydro-N-acetylmuramic acid kinase from Shewanella pealeana (strain ATCC 700345 / ANG-SQ1).